The chain runs to 558 residues: uncharacterized protein (558 aa).

The next 6 membrane-spanning stretches (helical) occupy residues 63-83 (LTGIVVALLVVTFAFPVPSIY), 90-110 (VTFGVAPAYATLALAIGTYWI), 143-163 (VAAVHLILWDIGGALLATLYG), 168-188 (VFVTIILFSVTICGVLVATNC), 226-246 (SLGSGVPVTGIATTALYVLLV), and 258-278 (VLILSITTLIFGFLVMWILAW). The region spanning 279–330 (LTAAPVRVVRAALKRVEQGDLRGDLVVFDGTELGELQRGFNAMVNGLRERER) is the HAMP domain. In terms of domain architecture, Guanylate cyclase spans 362 to 486 (AVVFVDIVGS…KPVNQAARLC (125 aa)). The interval 529–558 (TQLASPHRRPPGSIHLTAEHAEEIRTDRLG) is disordered. A compositionally biased stretch (basic and acidic residues) spans 545-558 (TAEHAEEIRTDRLG).

The protein belongs to the adenylyl cyclase class-3 family.

It is found in the cell membrane. This is an uncharacterized protein from Mycobacterium tuberculosis (strain CDC 1551 / Oshkosh).